A 199-amino-acid chain; its full sequence is Adenylate kinase (199 aa).

10 to 15 (GAGKGT) is an ATP binding site. The interval 30-59 (STGDMLRAAVAARTPVGLQAKSIMESGGLV) is NMP. Residues Thr-31, Arg-36, 57 to 59 (GLV), 85 to 88 (GFPR), and Gln-92 each bind AMP. The LID stretch occupies residues 126-142 (KRAAETLARGEAVRKDD). Residue Arg-127 participates in ATP binding. Positions 139 and 150 each coordinate AMP. Position 178 (Ala-178) interacts with ATP.

Belongs to the adenylate kinase family. Monomer.

Its subcellular location is the cytoplasm. The enzyme catalyses AMP + ATP = 2 ADP. It functions in the pathway purine metabolism; AMP biosynthesis via salvage pathway; AMP from ADP: step 1/1. Functionally, catalyzes the reversible transfer of the terminal phosphate group between ATP and AMP. Plays an important role in cellular energy homeostasis and in adenine nucleotide metabolism. In Methylobacterium nodulans (strain LMG 21967 / CNCM I-2342 / ORS 2060), this protein is Adenylate kinase.